The primary structure comprises 206 residues: Protein-methionine-sulfoxide reductase heme-binding subunit MsrQ (206 aa).

Helical transmembrane passes span 14–34, 45–65, 82–102, 118–138, 149–169, and 179–199; these read IKPLLFVAGLLPFARWFWLGA, FLTRSSGTWTLVCLLVTLAIT, MCGLFAFFYGSLHFLAWVWWD, PFITVGFAAFVLMAALAATST, WQVLHRAVYAIGLLAILHFWW, and QPLLYGSVLALLLGWRVAAWW.

The protein belongs to the MsrQ family. As to quaternary structure, heterodimer of a catalytic subunit (MsrP) and a heme-binding subunit (MsrQ). Requires FMN as cofactor. Heme b serves as cofactor.

The protein resides in the cell inner membrane. In terms of biological role, part of the MsrPQ system that repairs oxidized periplasmic proteins containing methionine sulfoxide residues (Met-O), using respiratory chain electrons. Thus protects these proteins from oxidative-stress damage caused by reactive species of oxygen and chlorine generated by the host defense mechanisms. MsrPQ is essential for the maintenance of envelope integrity under bleach stress, rescuing a wide series of structurally unrelated periplasmic proteins from methionine oxidation. MsrQ provides electrons for reduction to the reductase catalytic subunit MsrP, using the quinone pool of the respiratory chain. The protein is Protein-methionine-sulfoxide reductase heme-binding subunit MsrQ of Bordetella bronchiseptica (strain ATCC BAA-588 / NCTC 13252 / RB50) (Alcaligenes bronchisepticus).